A 296-amino-acid polypeptide reads, in one-letter code: NmrA-like family domain-containing protein 1 (296 aa).

NADP(+) is bound by residues 11-16 (GATGAQ), 37-41 (RSPGR), 58-59 (DQ), 79-81 (TNF), Lys133, and 155-158 (YYEN).

This sequence belongs to the NmrA-type oxidoreductase family. Homodimer.

It is found in the cytoplasm. The protein localises to the perinuclear region. It localises to the nucleus. Redox sensor protein. Undergoes restructuring and subcellular redistribution in response to changes in intracellular NADPH/NADP(+) levels. The chain is NmrA-like family domain-containing protein 1 (NMRAL1) from Gallus gallus (Chicken).